A 351-amino-acid chain; its full sequence is Phosphoribosylformylglycinamidine cyclo-ligase (351 aa).

The protein belongs to the AIR synthase family.

It localises to the cytoplasm. It carries out the reaction 2-formamido-N(1)-(5-O-phospho-beta-D-ribosyl)acetamidine + ATP = 5-amino-1-(5-phospho-beta-D-ribosyl)imidazole + ADP + phosphate + H(+). It participates in purine metabolism; IMP biosynthesis via de novo pathway; 5-amino-1-(5-phospho-D-ribosyl)imidazole from N(2)-formyl-N(1)-(5-phospho-D-ribosyl)glycinamide: step 2/2. The chain is Phosphoribosylformylglycinamidine cyclo-ligase from Burkholderia pseudomallei (strain 668).